Consider the following 208-residue polypeptide: Ras-related protein Rab-6A (208 aa).

N-acetylserine is present on S2. GTP contacts are provided by S23, V24, G25, K26, T27, S28, D39, N40, Y42, and T45. Mg(2+) is bound at residue T27. The Switch 1 signature appears at 32–50; the sequence is RFMYDSFDNTYQATIGIDF. Residues T45 and D68 each coordinate Mg(2+). Residues 69-88 carry the Switch 2 motif; that stretch reads TAGQERFRSLIPSYIRDSTV. G71, N126, K127, D129, S156, A157, and K158 together coordinate GTP. A Phosphoserine modification is found at S184. S-geranylgeranyl cysteine attachment occurs at residues C206 and C208. At C208 the chain carries Cysteine methyl ester.

This sequence belongs to the small GTPase superfamily. Rab family. In terms of assembly, interacts with BICDL1; leads to its accumulation in the pericentrosomal region. Interacts with SCYL1BP1. Interacts with VSP52. Interacts with RABGAP1. Interacts with GCC2 (via its GRIP domain). Interacts with RAB6IP1 (via its RUN 1 domain). Interacts with TMF1. Interacts with CIMAP3. Interacts (GTP-bound) with APBA1/MINT1 isoform 3, also called Mint1_826, but not with isoform 1. Interacts with RIC1; the interaction is direct with a preference for RAB6A-GDP. Interacts with RGP1; the interaction is direct with a preference for RAB6A-GDP. Interacts (GTP-bound) with DYNLRB1; the interaction is direct. Interacts with BICD1. Interacts with BICD2; the interaction is direct. Interacts (GTP-bound) with VPS13B. As to quaternary structure, interacts with BICD1. Interacts (GDP-bound) with DYNLRB1; the interaction is direct. Interacts (GTP-bound) with VPS13B. Requires Mg(2+) as cofactor. Post-translationally, prenylated.

The protein localises to the golgi apparatus membrane. It is found in the cytoplasmic vesicle. It localises to the secretory vesicle. The protein resides in the acrosome membrane. It carries out the reaction GTP + H2O = GDP + phosphate + H(+). Its activity is regulated as follows. Regulated by guanine nucleotide exchange factors (GEFs) which promote the exchange of bound GDP for free GTP. Regulated by GTPase activating proteins (GAPs) which increase the GTP hydrolysis activity. Inhibited by GDP dissociation inhibitors (GDIs). Its function is as follows. The small GTPases Rab are key regulators of intracellular membrane trafficking, from the formation of transport vesicles to their fusion with membranes. Rabs cycle between an inactive GDP-bound form and an active GTP-bound form that is able to recruit to membranes different sets of downstream effectors directly responsible for vesicle formation, movement, tethering and fusion. RAB6A acts as a regulator of COPI-independent retrograde transport from the Golgi apparatus towards the endoplasmic reticulum (ER). Has a low GTPase activity. Recruits VPS13B to the Golgi membrane. Plays a role in neuron projection development. The protein is Ras-related protein Rab-6A of Mus musculus (Mouse).